The chain runs to 542 residues: Putative cysteine ligase BshC (542 aa).

A coiled-coil region spans residues 458–479; it reads LTKNATLLQAQIDFLHQTLQRA.

It belongs to the BshC family.

Its function is as follows. Involved in bacillithiol (BSH) biosynthesis. May catalyze the last step of the pathway, the addition of cysteine to glucosamine malate (GlcN-Mal) to generate BSH. This chain is Putative cysteine ligase BshC, found in Geobacillus sp. (strain WCH70).